The sequence spans 569 residues: uncharacterized protein (569 aa).

A helical membrane pass occupies residues valine 2–tyrosine 22.

It localises to the membrane. This is an uncharacterized protein from Mycoplasma pneumoniae (strain ATCC 29342 / M129 / Subtype 1) (Mycoplasmoides pneumoniae).